We begin with the raw amino-acid sequence, 166 residues long: Protein UL5 (166 aa).

It belongs to the RL11 family. In terms of assembly, interacts with host IQGAP1.

Its subcellular location is the host cytoplasm. Functionally, may play a role in rearrangement of cellular cytoskeleton towards an efficient viral assembly and spreading. This is Protein UL5 (UL5) from Human cytomegalovirus (strain AD169) (HHV-5).